The following is a 372-amino-acid chain: NAD(P)H-quinone oxidoreductase subunit 1 (372 aa).

Helical transmembrane passes span 27–47 (AVWM…GVLI), 97–117 (ALFT…YLIV), 128–148 (LGIG…GLLM), 166–186 (AAQS…IAMM), 204–224 (ILGW…IAAL), 254–274 (FALF…MVAI), 308–328 (AVGI…AILL), and 351–371 (VGLV…IAFG).

This sequence belongs to the complex I subunit 1 family. In terms of assembly, NDH-1 is composed of at least 11 different subunits.

The protein resides in the cellular thylakoid membrane. The enzyme catalyses a plastoquinone + NADH + (n+1) H(+)(in) = a plastoquinol + NAD(+) + n H(+)(out). It catalyses the reaction a plastoquinone + NADPH + (n+1) H(+)(in) = a plastoquinol + NADP(+) + n H(+)(out). Its function is as follows. NDH-1 shuttles electrons from an unknown electron donor, via FMN and iron-sulfur (Fe-S) centers, to quinones in the respiratory and/or the photosynthetic chain. The immediate electron acceptor for the enzyme in this species is believed to be plastoquinone. Couples the redox reaction to proton translocation, and thus conserves the redox energy in a proton gradient. The protein is NAD(P)H-quinone oxidoreductase subunit 1 of Cyanothece sp. (strain PCC 7425 / ATCC 29141).